The chain runs to 372 residues: tRNA-specific 2-thiouridylase MnmA (372 aa).

ATP-binding positions include 7 to 14 (GLSGGVDS) and M33. The interval 104 to 106 (NPD) is interaction with target base in tRNA. The active-site Nucleophile is the C109. C109 and C202 form a disulfide bridge. G134 serves as a coordination point for ATP. Residues 152–154 (KDQ) are interaction with tRNA. C202 (cysteine persulfide intermediate) is an active-site residue. The tract at residues 310-311 (RY) is interaction with tRNA.

Belongs to the MnmA/TRMU family.

It localises to the cytoplasm. It carries out the reaction S-sulfanyl-L-cysteinyl-[protein] + uridine(34) in tRNA + AH2 + ATP = 2-thiouridine(34) in tRNA + L-cysteinyl-[protein] + A + AMP + diphosphate + H(+). In terms of biological role, catalyzes the 2-thiolation of uridine at the wobble position (U34) of tRNA, leading to the formation of s(2)U34. This is tRNA-specific 2-thiouridylase MnmA from Mesomycoplasma hyopneumoniae (strain 7448) (Mycoplasma hyopneumoniae).